The sequence spans 61 residues: Short neurotoxin 4 (61 aa).

Cystine bridges form between Cys-3-Cys-23, Cys-17-Cys-40, Cys-42-Cys-53, and Cys-54-Cys-59.

Belongs to the three-finger toxin family. Short-chain subfamily. Type I alpha-neurotoxin sub-subfamily. In terms of tissue distribution, expressed by the venom gland.

It localises to the secreted. Its function is as follows. Binds to muscle nicotinic acetylcholine receptor (nAChR) and inhibit acetylcholine from binding to the receptor, thereby impairing neuromuscular transmission. This Naja annulifera (Banded Egyptian cobra) protein is Short neurotoxin 4.